The sequence spans 264 residues: Phosphonoacetaldehyde hydrolase (264 aa).

D9 acts as the Nucleophile in catalysis. Mg(2+) is bound by residues D9 and A11. K50 serves as the catalytic Schiff-base intermediate with substrate. Residue D183 coordinates Mg(2+).

It belongs to the HAD-like hydrolase superfamily. PhnX family. As to quaternary structure, homodimer. Requires Mg(2+) as cofactor.

The enzyme catalyses phosphonoacetaldehyde + H2O = acetaldehyde + phosphate + H(+). In terms of biological role, involved in phosphonate degradation. This is Phosphonoacetaldehyde hydrolase from Bacillus mycoides (strain KBAB4) (Bacillus weihenstephanensis).